Reading from the N-terminus, the 166-residue chain is Ribosome maturation factor RimM (166 aa).

In terms of domain architecture, PRC barrel spans 95–164 (EEEYYAYELV…KKIIVKEELL (70 aa)).

This sequence belongs to the RimM family. As to quaternary structure, binds ribosomal protein uS19.

The protein resides in the cytoplasm. An accessory protein needed during the final step in the assembly of 30S ribosomal subunit, possibly for assembly of the head region. Essential for efficient processing of 16S rRNA. May be needed both before and after RbfA during the maturation of 16S rRNA. It has affinity for free ribosomal 30S subunits but not for 70S ribosomes. The polypeptide is Ribosome maturation factor RimM (Aquifex aeolicus (strain VF5)).